The primary structure comprises 410 residues: Histone-lysine N-methyltransferase SUV39H2 (410 aa).

A Chromo domain is found at tyrosine 47 to lysine 105. Positions phenylalanine 189 to glycine 247 constitute a Pre-SET domain. Cysteine 191, cysteine 193, cysteine 196, cysteine 201, cysteine 202, cysteine 229, cysteine 233, cysteine 235, and cysteine 239 together coordinate Zn(2+). One can recognise an SET domain in the interval tyrosine 250–glutamine 373. Residues arginine 261–tryptophan 263, tyrosine 304, and asparagine 330–histidine 331 each bind S-adenosyl-L-methionine. Cysteine 333 is a binding site for Zn(2+). Phosphoserine is present on residues serine 381, serine 384, and serine 388. The Post-SET domain maps to valine 394–asparagine 410. Positions 398, 400, and 405 each coordinate Zn(2+).

Belongs to the class V-like SAM-binding methyltransferase superfamily. Histone-lysine methyltransferase family. Suvar3-9 subfamily. Interacts with SMAD5. The large PER complex involved in the histone methylation is composed of at least PER2, CBX3, TRIM28, SUV39H1 and/or SUV39H2; CBX3 mediates the formation of the complex. In terms of processing, ubiquitinated by the DCX(DCAF13) E3 ubiquitin ligase complex, leading to its degradation.

It is found in the nucleus. Its subcellular location is the chromosome. The protein resides in the centromere. It catalyses the reaction L-lysyl(9)-[histone H3] + 3 S-adenosyl-L-methionine = N(6),N(6),N(6)-trimethyl-L-lysyl(9)-[histone H3] + 3 S-adenosyl-L-homocysteine + 3 H(+). Histone methyltransferase that specifically trimethylates 'Lys-9' of histone H3 using monomethylated H3 'Lys-9' as substrate. H3 'Lys-9' trimethylation represents a specific tag for epigenetic transcriptional repression by recruiting HP1 (CBX1, CBX3 and/or CBX5) proteins to methylated histones. Mainly functions in heterochromatin regions, thereby playing a central role in the establishment of constitutive heterochromatin at pericentric and telomere regions. H3 'Lys-9' trimethylation is also required to direct DNA methylation at pericentric repeats. SUV39H1 is targeted to histone H3 via its interaction with RB1 and is involved in many processes, such as cell cycle regulation, transcriptional repression and regulation of telomere length. May participate in regulation of higher-order chromatin organization during spermatogenesis. Recruited by the large PER complex to the E-box elements of the circadian target genes such as PER2 itself or PER1, contributes to the conversion of local chromatin to a heterochromatin-like repressive state through H3 'Lys-9' trimethylation. This Macaca fascicularis (Crab-eating macaque) protein is Histone-lysine N-methyltransferase SUV39H2 (SUV39H2).